The primary structure comprises 219 residues: Protein-L-isoaspartate O-methyltransferase (219 aa).

The active site involves Ser-66.

It belongs to the methyltransferase superfamily. L-isoaspartyl/D-aspartyl protein methyltransferase family.

Its subcellular location is the cytoplasm. It catalyses the reaction [protein]-L-isoaspartate + S-adenosyl-L-methionine = [protein]-L-isoaspartate alpha-methyl ester + S-adenosyl-L-homocysteine. Functionally, catalyzes the methyl esterification of L-isoaspartyl residues in peptides and proteins that result from spontaneous decomposition of normal L-aspartyl and L-asparaginyl residues. It plays a role in the repair and/or degradation of damaged proteins. The sequence is that of Protein-L-isoaspartate O-methyltransferase from Xanthobacter autotrophicus (strain ATCC BAA-1158 / Py2).